Consider the following 145-residue polypeptide: Photosystem I reaction center subunit XI (145 aa).

A run of 3 helical transmembrane segments spans residues 48-68 (LEIG…LGPL), 75-95 (LLVG…ALTI), and 125-145 (IGAL…SFFA).

It belongs to the PsaL family.

Its subcellular location is the plastid. It is found in the chloroplast thylakoid membrane. The chain is Photosystem I reaction center subunit XI from Isochrysis galbana (Marine planktonic alga).